Here is a 449-residue protein sequence, read N- to C-terminus: Glucose-6-phosphate isomerase (449 aa).

E290 (proton donor) is an active-site residue. Catalysis depends on residues H311 and K425.

The protein belongs to the GPI family.

It is found in the cytoplasm. It catalyses the reaction alpha-D-glucose 6-phosphate = beta-D-fructose 6-phosphate. It participates in carbohydrate biosynthesis; gluconeogenesis. Its pathway is carbohydrate degradation; glycolysis; D-glyceraldehyde 3-phosphate and glycerone phosphate from D-glucose: step 2/4. Its function is as follows. Catalyzes the reversible isomerization of glucose-6-phosphate to fructose-6-phosphate. This Exiguobacterium sibiricum (strain DSM 17290 / CCUG 55495 / CIP 109462 / JCM 13490 / 255-15) protein is Glucose-6-phosphate isomerase.